We begin with the raw amino-acid sequence, 322 residues long: Solute carrier family 35 member B1 (322 aa).

The next 8 helical transmembrane spans lie at 12-32 (LRLP…GILQ), 51-71 (FALT…KILI), 85-105 (WLYA…NSAL), 136-156 (YPLA…LFMY), 168-188 (TVGF…LTGV), 210-230 (LWST…WEFL), 243-263 (ILLF…TVVY), and 285-305 (VILF…LVFL). The short motif at 318–322 (KKTSH) is the Di-lysine motif element.

Belongs to the nucleotide-sugar transporter family. SLC35B subfamily.

It is found in the endoplasmic reticulum membrane. It carries out the reaction ADP(in) + ATP(out) = ADP(out) + ATP(in). The enzyme catalyses UDP(out) + ATP(in) = UDP(in) + ATP(out). It catalyses the reaction UTP(out) + ATP(in) = UTP(in) + ATP(out). The catalysed reaction is dATP(out) + ATP(in) = dATP(in) + ATP(out). In terms of biological role, ATP:ADP antiporter that catalyzes the exchange of ATP and ADP across the endoplasmic reticulum (ER) membrane. Imports ATP from the cytosol to the ER lumen and exports ADP in the opposite direction. Regulates ER energy metabolism and protein biogenesis. Appears to be part of a calcium-dependent ER to cytosol low energy response axis, where calcium efflux from ER to the cytosol triggers ATP import into the ER lumen to maintain sufficient ATP supply. Provides ATP to ER chaperone HSPA5 that drives protein folding and trafficking in the ER. Can transport dATP, UTP or UDP in exchange for ATP, but the physiological relevance of this process remains to be established. In Mus musculus (Mouse), this protein is Solute carrier family 35 member B1 (Slc35b1).